We begin with the raw amino-acid sequence, 221 residues long: Deoxyribose-phosphate aldolase (221 aa).

The active-site Proton donor/acceptor is aspartate 90. The active-site Schiff-base intermediate with acetaldehyde is the lysine 152. Lysine 181 (proton donor/acceptor) is an active-site residue.

The protein belongs to the DeoC/FbaB aldolase family. DeoC type 1 subfamily.

The protein localises to the cytoplasm. The enzyme catalyses 2-deoxy-D-ribose 5-phosphate = D-glyceraldehyde 3-phosphate + acetaldehyde. It participates in carbohydrate degradation; 2-deoxy-D-ribose 1-phosphate degradation; D-glyceraldehyde 3-phosphate and acetaldehyde from 2-deoxy-alpha-D-ribose 1-phosphate: step 2/2. In terms of biological role, catalyzes a reversible aldol reaction between acetaldehyde and D-glyceraldehyde 3-phosphate to generate 2-deoxy-D-ribose 5-phosphate. The protein is Deoxyribose-phosphate aldolase of Exiguobacterium sp. (strain ATCC BAA-1283 / AT1b).